Here is a 312-residue protein sequence, read N- to C-terminus: Plasma membrane-associated coenzyme Q6 reductase PGA3 (312 aa).

The Extracellular portion of the chain corresponds to 1–15; the sequence is MSKEDIEGTNILDEP. Residues 16 to 36 form a helical membrane-spanning segment; the sequence is VHGIYIPAALFVVGVAITTYM. Residues 37–39 lie on the Cytoplasmic side of the membrane; that stretch reads SGE. A helical membrane pass occupies residues 40–60; it reads LKILWSLPILFMIIFVRAYSA. Over 61-179 the chain is Extracellular; the sequence is YKRRRSLYPD…LNYEPNSSKH (119 aa). An FAD-binding FR-type domain is found at 70–173; the sequence is DRWTSLELED…KGPIGTLNYE (104 aa). FAD is bound by residues 153 to 168 and 179 to 211; these read AGLNSGDTVDFKGPIG and HLGIVAGGSGITPVLQILNEIITVPEDLTKVSL. A helical membrane pass occupies residues 180-200; the sequence is LGIVAGGSGITPVLQILNEII. Topologically, residues 201 to 312 are cytoplasmic; it reads TVPEDLTKVS…SSGDDQVFVF (112 aa).

Belongs to the flavoprotein pyridine nucleotide cytochrome reductase family. FAD serves as cofactor.

The protein localises to the cell membrane. Its subcellular location is the endoplasmic reticulum membrane. The enzyme catalyses 2 Fe(III)-[cytochrome b5] + NADH = 2 Fe(II)-[cytochrome b5] + NAD(+) + H(+). Its activity is regulated as follows. Inhibited by diphenylene iodonium (DPI). Functionally, NADH-dependent cytochrome b5 reductase that reduces coenzyme Q6 at the plasma membrane and mediates lifespan extension by calorie restriction by shifting fermentative to respiratory metabolism, probably through modulating the NAD(+)/NADH ratio. This chain is Plasma membrane-associated coenzyme Q6 reductase PGA3 (PGA3), found in Saccharomyces cerevisiae (strain ATCC 204508 / S288c) (Baker's yeast).